The primary structure comprises 298 residues: Tyrosine recombinase XerC (298 aa).

Residues 2–88 (TDLHTDVERY…ALRSFFDWLV (87 aa)) enclose the Core-binding (CB) domain. Residues 109–288 (HLPKNIDVDD…DFQHLASVYD (180 aa)) enclose the Tyr recombinase domain. Active-site residues include Arg148, Lys172, His240, Arg243, and His266. Tyr275 (O-(3'-phospho-DNA)-tyrosine intermediate) is an active-site residue.

This sequence belongs to the 'phage' integrase family. XerC subfamily. In terms of assembly, forms a cyclic heterotetrameric complex composed of two molecules of XerC and two molecules of XerD, in which XerC interacts with XerD via its C-terminal region, XerD interacts with XerC via its C-terminal region and so on.

The protein resides in the cytoplasm. FtsK may regulate the catalytic switch between XerC and XerD in the heterotetrameric complex during the two steps of the recombination process. Its function is as follows. Site-specific tyrosine recombinase, which acts by catalyzing the cutting and rejoining of the recombining DNA molecules. Binds cooperatively to specific DNA consensus sequences that are separated from XerD binding sites by a short central region, forming the heterotetrameric XerC-XerD complex that recombines DNA substrates. The complex is essential to convert dimers of the bacterial chromosome into monomers to permit their segregation at cell division. It also contributes to the segregational stability of plasmids. In the complex XerC specifically exchanges the top DNA strands. The sequence is that of Tyrosine recombinase XerC from Shigella dysenteriae serotype 1 (strain Sd197).